Here is an 832-residue protein sequence, read N- to C-terminus: Subtilisin-like protease SBT2.4 (832 aa).

The signal sequence occupies residues 1–27; the sequence is METNPRKLRSYSYICLIVCIFVLVVCA. Residues 74–138 form the Inhibitor I9 domain; the sequence is EAKKIEEIHD…VEEDKGVKLM (65 aa). The Peptidase S8 domain maps to 150 to 690; that stretch reads QQVWQKISNE…AGHVNPARAL (541 aa). Asp174 acts as the Charge relay system in catalysis. Residues Asn196 and Asn238 are each glycosylated (N-linked (GlcNAc...) asparagine). His252 (charge relay system) is an active-site residue. Positions 425–524 constitute a PA domain; that stretch reads TNGSVLQPLT…SAAQIILRYY (100 aa). A glycan (N-linked (GlcNAc...) asparagine) is linked at Asn426. The active-site Charge relay system is the Ser618. N-linked (GlcNAc...) asparagine glycans are attached at residues Asn761, Asn774, and Asn800.

Belongs to the peptidase S8 family.

The protein resides in the secreted. In terms of biological role, serine protease required for epidermal surface formation in embryos and juvenile plants. Involved in embryonic cuticle formation downstream of BHLH95/ZOU. The protein is Subtilisin-like protease SBT2.4 of Arabidopsis thaliana (Mouse-ear cress).